The chain runs to 336 residues: tRNA N6-adenosine threonylcarbamoyltransferase (336 aa).

Fe cation-binding residues include His-114 and His-118. Residues 136–140 (LVSGG), Asp-169, Gly-182, Asp-186, and Asn-275 each bind substrate. Asp-301 serves as a coordination point for Fe cation.

This sequence belongs to the KAE1 / TsaD family. It depends on Fe(2+) as a cofactor.

The protein resides in the cytoplasm. It catalyses the reaction L-threonylcarbamoyladenylate + adenosine(37) in tRNA = N(6)-L-threonylcarbamoyladenosine(37) in tRNA + AMP + H(+). In terms of biological role, required for the formation of a threonylcarbamoyl group on adenosine at position 37 (t(6)A37) in tRNAs that read codons beginning with adenine. Is involved in the transfer of the threonylcarbamoyl moiety of threonylcarbamoyl-AMP (TC-AMP) to the N6 group of A37, together with TsaE and TsaB. TsaD likely plays a direct catalytic role in this reaction. In Streptococcus gordonii (strain Challis / ATCC 35105 / BCRC 15272 / CH1 / DL1 / V288), this protein is tRNA N6-adenosine threonylcarbamoyltransferase.